Consider the following 224-residue polypeptide: Protein GrpE (224 aa).

2 stretches are compositionally biased toward polar residues: residues 1–16 (MSGDASTSAQDQNVES) and 209–224 (ESSSDAASEQPQEGDA). 2 disordered regions span residues 1 to 35 (MSGDASTSAQDQNVESNDVPAIPDVDAGTPIDPVV) and 203 to 224 (SMGPGPESSSDAASEQPQEGDA).

This sequence belongs to the GrpE family. In terms of assembly, homodimer.

The protein resides in the cytoplasm. In terms of biological role, participates actively in the response to hyperosmotic and heat shock by preventing the aggregation of stress-denatured proteins, in association with DnaK and GrpE. It is the nucleotide exchange factor for DnaK and may function as a thermosensor. Unfolded proteins bind initially to DnaJ; upon interaction with the DnaJ-bound protein, DnaK hydrolyzes its bound ATP, resulting in the formation of a stable complex. GrpE releases ADP from DnaK; ATP binding to DnaK triggers the release of the substrate protein, thus completing the reaction cycle. Several rounds of ATP-dependent interactions between DnaJ, DnaK and GrpE are required for fully efficient folding. The protein is Protein GrpE of Synechococcus sp. (strain CC9902).